We begin with the raw amino-acid sequence, 242 residues long: MSGHSKWHNIQGRKNAQDAKRGKVFQKISRELYMAVKAGGPDPDSNAQLRLVMDKAKAANMPKDNIKRAVDKGSGSGAENYEEVTYEGYGPGGIAVLVHALTDNKNRTAAAVRSAFTHHGGALAATGAVSYMFDRKGYIVISREDLDTDEDTMLMDVLDAGGDDLQSSDEAFEIYTDPKQLAAVRDALEANGYKLETAELTMIPENLTDVPADKVEKLQHMIDELEDNDDVSEVYEAANYPD.

Positions 1-21 are disordered; sequence MSGHSKWHNIQGRKNAQDAKR.

It belongs to the TACO1 family.

The protein resides in the cytoplasm. The sequence is that of Probable transcriptional regulatory protein lp_2253 from Lactiplantibacillus plantarum (strain ATCC BAA-793 / NCIMB 8826 / WCFS1) (Lactobacillus plantarum).